The chain runs to 95 residues: Integration host factor subunit beta (95 aa).

This sequence belongs to the bacterial histone-like protein family. As to quaternary structure, heterodimer of an alpha and a beta chain.

In terms of biological role, this protein is one of the two subunits of integration host factor, a specific DNA-binding protein that functions in genetic recombination as well as in transcriptional and translational control. This chain is Integration host factor subunit beta, found in Shewanella loihica (strain ATCC BAA-1088 / PV-4).